Here is a 382-residue protein sequence, read N- to C-terminus: Anhydro-N-acetylmuramic acid kinase (382 aa).

An ATP-binding site is contributed by 9 to 16 (GTSLDGID).

The protein belongs to the anhydro-N-acetylmuramic acid kinase family.

It carries out the reaction 1,6-anhydro-N-acetyl-beta-muramate + ATP + H2O = N-acetyl-D-muramate 6-phosphate + ADP + H(+). Its pathway is amino-sugar metabolism; 1,6-anhydro-N-acetylmuramate degradation. It participates in cell wall biogenesis; peptidoglycan recycling. Its function is as follows. Catalyzes the specific phosphorylation of 1,6-anhydro-N-acetylmuramic acid (anhMurNAc) with the simultaneous cleavage of the 1,6-anhydro ring, generating MurNAc-6-P. Is required for the utilization of anhMurNAc either imported from the medium or derived from its own cell wall murein, and thus plays a role in cell wall recycling. In Bacillus cereus (strain Q1), this protein is Anhydro-N-acetylmuramic acid kinase.